We begin with the raw amino-acid sequence, 521 residues long: D-aminoacyl-tRNA deacylase (521 aa).

Disordered regions lie at residues alanine 323–serine 353 and valine 499–serine 521. Over residues valine 343 to serine 353 the composition is skewed to basic and acidic residues. The span at serine 501 to serine 521 shows a compositional bias: low complexity.

Belongs to the DtdA deacylase family. In terms of assembly, monomer. It depends on Zn(2+) as a cofactor.

It carries out the reaction a D-aminoacyl-tRNA + H2O = a tRNA + a D-alpha-amino acid + H(+). The enzyme catalyses glycyl-tRNA(Ala) + H2O = tRNA(Ala) + glycine + H(+). In terms of biological role, D-aminoacyl-tRNA deacylase with broad substrate specificity. By recycling D-aminoacyl-tRNA to D-amino acids and free tRNA molecules, this enzyme counteracts the toxicity associated with the formation of D-aminoacyl-tRNA entities in vivo. The sequence is that of D-aminoacyl-tRNA deacylase from Haloquadratum walsbyi (strain DSM 16790 / HBSQ001).